Here is a 51-residue protein sequence, read N- to C-terminus: Large ribosomal subunit protein bL33 (51 aa).

This sequence belongs to the bacterial ribosomal protein bL33 family.

The protein is Large ribosomal subunit protein bL33 of Hahella chejuensis (strain KCTC 2396).